Here is a 249-residue protein sequence, read N- to C-terminus: Inhibitor of growth protein 4 (249 aa).

Residues 25–118 (FQLMRDLDQR…ADLKEKQIES (94 aa)) are a coiled coil. An N6-acetyllysine mark is found at Lys-112, Lys-127, and Lys-129. A disordered region spans residues 115-163 (QIESSDYDSSSSKGKKKGRTQKEKKAARARSKGKNSDEEAPKAAQKKLK). The Bipartite nuclear localization signal motif lies at 127–148 (KGKKKGRTQKEKKAARARSKGK). Citrulline is present on Arg-133. N6-acetyllysine occurs at positions 146, 148, and 156. Residue Arg-166 is modified to Citrulline. The segment at 196-245 (PTYCLCHQVSYGEMIGCDNPDCSIEWFHFACVGLTTKPRGKWFCPRCSQE) adopts a PHD-type zinc-finger fold. The Zn(2+) site is built by Cys-199, Cys-201, Cys-212, Cys-217, His-223, Cys-226, Cys-239, and Cys-242.

Belongs to the ING family. As to quaternary structure, homodimer. Component of the HBO1 complex composed of KAT7/HBO1, MEAF6, ING4 or ING5, and one scaffold subunit: complexes containing BRPF scaffold (BRPF1, BRD1/BRPF2 or BRPF3) direct KAT7/HBO1 specificity towards H3K14ac, while complexes containing JADE scaffold (JADE1, JADE2 and JADE3) mediate acetylation of histone H4. Interacts with H3K4me3 and to a lesser extent with H3K4me2, the interaction augments KAT7/HBO1 acetylation activity on H3 tails. Interacts with EP300, RELA and TP53; these interactions may be indirect. Interacts with EGLN1. In terms of assembly, interacts with BCL2A1. In terms of processing, citrullination by PADI4 within the nuclear localization signal disrupts the interaction with p53 and increases susceptibility to degradation. Isoform 2, isoform 3, isoform 4 and isoform 5 are expressed in the mammary gland, ovary, spleen and muscle. In terms of tissue distribution, expressed in the mammary gland, ovary, spleen and muscle.

Its subcellular location is the nucleus. Component of HBO1 complexes, which specifically mediate acetylation of histone H3 at 'Lys-14' (H3K14ac), and have reduced activity toward histone H4. Through chromatin acetylation it may function in DNA replication. May inhibit tumor progression by modulating the transcriptional output of signaling pathways which regulate cell proliferation. Can suppress brain tumor angiogenesis through transcriptional repression of RELA/NFKB3 target genes when complexed with RELA. May also specifically suppress loss of contact inhibition elicited by activated oncogenes such as MYC. Represses hypoxia inducible factor's (HIF) activity by interacting with HIF prolyl hydroxylase 2 (EGLN1). Can enhance apoptosis induced by serum starvation in mammary epithelial cell line HC11. The sequence is that of Inhibitor of growth protein 4 (Ing4) from Mus musculus (Mouse).